A 443-amino-acid chain; its full sequence is MMDAWPRCLERLEAEFPPEDVHTWLKPLQAEDRGDSIVLYAPNAFIVDQVRERYLPRIRELLAYFAGNGEVALAVGSRPRAPEPAPAPVAATIAPQAAPIAPFAGNLDSHYTFANFVEGRSNQLGLAAAIQAAQKPGDRAHNPLLLYGSTGLGKTHLMFAAGNALRQAKPAAKVMYLRSEQFFSAMIRALQDKAMDQFKRQFQQIDALLIDDIQFFAGKDRTQEEFFHTFNALFDGRQQIILTCDRYPREVEGLEPRLKSRLAWGLSVAIDPPDFETRAAIVLAKARERGAEIPDDVAFLIAKKMRSNVRDLEGALNTLVARANFTGRSITVEFAQETLRDLLRAQQQAIGIPNIQKTVADYYGLQMKDLLSKRRTRSLARPRQVAMALAKELTEHSLPEIGDAFAGRDHTTVLHACRQIRTLMEADGKLREDWEKLIRKLSE.

The segment at 1-76 (MMDAWPRCLE…GNGEVALAVG (76 aa)) is domain I, interacts with DnaA modulators. A domain II region spans residues 76–105 (GSRPRAPEPAPAPVAATIAPQAAPIAPFAG). The domain III, AAA+ region stretch occupies residues 106–323 (NLDSHYTFAN…GALNTLVARA (218 aa)). ATP-binding residues include glycine 151, glycine 153, lysine 154, and threonine 155. The tract at residues 324–443 (NFTGRSITVE…WEKLIRKLSE (120 aa)) is domain IV, binds dsDNA.

This sequence belongs to the DnaA family. In terms of assembly, oligomerizes as a right-handed, spiral filament on DNA at oriC.

The protein resides in the cytoplasm. In terms of biological role, plays an essential role in the initiation and regulation of chromosomal replication. ATP-DnaA binds to the origin of replication (oriC) to initiate formation of the DNA replication initiation complex once per cell cycle. Binds the DnaA box (a 9 base pair repeat at the origin) and separates the double-stranded (ds)DNA. Forms a right-handed helical filament on oriC DNA; dsDNA binds to the exterior of the filament while single-stranded (ss)DNA is stabiized in the filament's interior. The ATP-DnaA-oriC complex binds and stabilizes one strand of the AT-rich DNA unwinding element (DUE), permitting loading of DNA polymerase. After initiation quickly degrades to an ADP-DnaA complex that is not apt for DNA replication. Binds acidic phospholipids. The sequence is that of Chromosomal replication initiator protein DnaA from Xanthomonas oryzae pv. oryzae (strain KACC10331 / KXO85).